The sequence spans 556 residues: Secreted RxLR effector protein 114 (556 aa).

An N-terminal signal peptide occupies residues 1 to 19; it reads MCGAHFVAIALLVAAGCQT. 3 disordered regions span residues 43-76, 108-138, and 389-408; these read LQSR…GVLK, NQLK…DSDK, and NDKS…EDWN. The RxLR-dEER motif lies at 46–66; it reads RNLRESRDSKDDLLSAGDEER. A compositionally biased stretch (basic and acidic residues) spans 47-67; it reads NLRESRDSKDDLLSAGDEERT.

Belongs to the RxLR effector family.

It localises to the secreted. The protein localises to the host cell. Its function is as follows. Secreted effector that partially suppresses the host cell death induced by cell death-inducing proteins. The sequence is that of Secreted RxLR effector protein 114 from Plasmopara viticola (Downy mildew of grapevine).